Consider the following 286-residue polypeptide: ATP synthase gamma chain (286 aa).

The protein belongs to the ATPase gamma chain family. F-type ATPases have 2 components, CF(1) - the catalytic core - and CF(0) - the membrane proton channel. CF(1) has five subunits: alpha(3), beta(3), gamma(1), delta(1), epsilon(1). CF(0) has three main subunits: a, b and c.

The protein localises to the cell membrane. Functionally, produces ATP from ADP in the presence of a proton gradient across the membrane. The gamma chain is believed to be important in regulating ATPase activity and the flow of protons through the CF(0) complex. The chain is ATP synthase gamma chain from Bacillus anthracis (strain A0248).